The following is a 368-amino-acid chain: Large ribosomal subunit protein bL27m (368 aa).

The N-terminal 20 residues, 1–20 (MFSGLHTSKYACQVVVQIRT), are a transit peptide targeting the mitochondrion. Residues 23–44 (KRAAGSRTSMKDSAGRRLGPKK) form a disordered region. A compositionally biased stretch (basic and acidic residues) spans 31–44 (SMKDSAGRRLGPKK).

It belongs to the bacterial ribosomal protein bL27 family.

The protein localises to the mitochondrion. Functionally, component of the large subunit of mitochondrial ribosome. This is Large ribosomal subunit protein bL27m (MRPL2) from Candida glabrata (strain ATCC 2001 / BCRC 20586 / JCM 3761 / NBRC 0622 / NRRL Y-65 / CBS 138) (Yeast).